The chain runs to 185 residues: MGRSAGFILWLTGLSGAGKSTLSRALRAHLASSMPVEVLDGDEVRTWLSRGLGFTREDREENVRRIGHVARLLAKHGVGVIAAAISPYASSRAEVRRLAEEAGIPFVEIYVQAPLDVLIARDVKGLYKKALAGELAHFTGVSDPYEAPDAPDVTVHSDVDTVEAGLWRVLETLRKRGLLDAAAAA.

13–20 is a binding site for ATP; that stretch reads GLSGAGKS. Serine 86 serves as the catalytic Phosphoserine intermediate.

The protein belongs to the APS kinase family.

The catalysed reaction is adenosine 5'-phosphosulfate + ATP = 3'-phosphoadenylyl sulfate + ADP + H(+). It participates in sulfur metabolism; hydrogen sulfide biosynthesis; sulfite from sulfate: step 2/3. Functionally, catalyzes the synthesis of activated sulfate. In Myxococcus xanthus (strain DK1622), this protein is Adenylyl-sulfate kinase.